A 241-amino-acid polypeptide reads, in one-letter code: LexA repressor (241 aa).

The segment at residues 26–46 (FDEMKTALDLRSKSGIHRLIT) is a DNA-binding region (H-T-H motif). Residues S162 and K200 each act as for autocatalytic cleavage activity in the active site.

The protein belongs to the peptidase S24 family. Homodimer.

It carries out the reaction Hydrolysis of Ala-|-Gly bond in repressor LexA.. Its function is as follows. Represses a number of genes involved in the response to DNA damage (SOS response), including recA and lexA. In the presence of single-stranded DNA, RecA interacts with LexA causing an autocatalytic cleavage which disrupts the DNA-binding part of LexA, leading to derepression of the SOS regulon and eventually DNA repair. This is LexA repressor from Ruegeria sp. (strain TM1040) (Silicibacter sp.).